The chain runs to 124 residues: Putative membrane protein insertion efficiency factor (124 aa).

The segment covering 1–12 (MCPQPHADHAIT) has biased composition (basic and acidic residues). A disordered region spans residues 1–26 (MCPQPHADHAITRGDTGAAGGRNWSG).

It belongs to the UPF0161 family.

It is found in the cell inner membrane. Functionally, could be involved in insertion of integral membrane proteins into the membrane. The sequence is that of Putative membrane protein insertion efficiency factor from Rhizobium meliloti (strain 1021) (Ensifer meliloti).